We begin with the raw amino-acid sequence, 90 residues long: Small ribosomal subunit protein bS20 (90 aa).

It belongs to the bacterial ribosomal protein bS20 family.

In terms of biological role, binds directly to 16S ribosomal RNA. This chain is Small ribosomal subunit protein bS20, found in Fusobacterium nucleatum subsp. nucleatum (strain ATCC 25586 / DSM 15643 / BCRC 10681 / CIP 101130 / JCM 8532 / KCTC 2640 / LMG 13131 / VPI 4355).